We begin with the raw amino-acid sequence, 473 residues long: Glutamate--tRNA ligase (473 aa).

Positions 9-19 (PSPTGELHLGS) match the 'HIGH' region motif. Residues 237 to 241 (KLSKK) carry the 'KMSKS' region motif. Lys240 provides a ligand contact to ATP.

It belongs to the class-I aminoacyl-tRNA synthetase family. Glutamate--tRNA ligase type 1 subfamily. Monomer.

Its subcellular location is the cytoplasm. It catalyses the reaction tRNA(Glu) + L-glutamate + ATP = L-glutamyl-tRNA(Glu) + AMP + diphosphate. In terms of biological role, catalyzes the attachment of glutamate to tRNA(Glu) in a two-step reaction: glutamate is first activated by ATP to form Glu-AMP and then transferred to the acceptor end of tRNA(Glu). This Wigglesworthia glossinidia brevipalpis protein is Glutamate--tRNA ligase.